The chain runs to 141 residues: MVHSQLPVAAPLRLLCALLLLPSATMIPGGISPRSVTDPDVQKAAEFAVQEYNALSTNAYYYKQLRIVEAQSQVVAGAKYYLTMELMKTKCAKTTGKPKVYKEIQNCELPPKAQQEKLTCHFQVWSRPWLEKMELTKMSCN.

The signal sequence occupies residues 1–26; that stretch reads MVHSQLPVAAPLRLLCALLLLPSATM. The Cystatin domain occupies 29-129; the sequence is GGISPRSVTD…CHFQVWSRPW (101 aa). Residues 73–77 carry the Secondary area of contact motif; that stretch reads QVVAG. 2 disulfide bridges follow: cysteine 91–cysteine 107 and cysteine 120–cysteine 140.

This sequence belongs to the cystatin family. As to expression, expressed by the venom gland at an extremely low level (at protein level).

It localises to the secreted. Inhibits various C1 cysteine proteases including cathepsin L, papain and cathepsin B. This protein has no toxic activity and its function in the venom is unknown. It may play a role as a housekeeping or regulatory protein. This Oxyuranus microlepidotus (Inland taipan) protein is Cystatin.